The following is a 335-amino-acid chain: Casein kinase I (335 aa).

In terms of domain architecture, Protein kinase spans 9–278 (YRLGRKIGSG…LRRLFKDLFF (270 aa)). ATP is bound by residues 15 to 23 (IGSGSFGDI) and lysine 38. Aspartate 128 serves as the catalytic Proton acceptor. A disordered region spans residues 304–335 (RSMVNQGAESGNQWRRDASGRDPLGRLPQLEP). A compositionally biased stretch (polar residues) spans 305–316 (SMVNQGAESGNQ). The span at 317-327 (WRRDASGRDPL) shows a compositional bias: basic and acidic residues.

The protein belongs to the protein kinase superfamily. CK1 Ser/Thr protein kinase family. Casein kinase I subfamily.

The enzyme catalyses L-seryl-[protein] + ATP = O-phospho-L-seryl-[protein] + ADP + H(+). It catalyses the reaction L-threonyl-[protein] + ATP = O-phospho-L-threonyl-[protein] + ADP + H(+). Functionally, casein kinases are operationally defined by their preferential utilization of acidic proteins such as caseins as substrates. It can phosphorylate a large number of proteins. The protein is Casein kinase I of Eimeria tenella (Coccidian parasite).